Consider the following 359-residue polypeptide: 3-dehydroquinate synthase (359 aa).

Residues 72–77 (EGEIHK), 106–110 (GVIGD), 130–131 (TS), Lys143, Lys152, and 170–173 (CLKT) each bind NAD(+). Glu185, His248, and His264 together coordinate Zn(2+).

Belongs to the sugar phosphate cyclases superfamily. Dehydroquinate synthase family. It depends on Co(2+) as a cofactor. The cofactor is Zn(2+). NAD(+) is required as a cofactor.

It localises to the cytoplasm. The enzyme catalyses 7-phospho-2-dehydro-3-deoxy-D-arabino-heptonate = 3-dehydroquinate + phosphate. It participates in metabolic intermediate biosynthesis; chorismate biosynthesis; chorismate from D-erythrose 4-phosphate and phosphoenolpyruvate: step 2/7. In terms of biological role, catalyzes the conversion of 3-deoxy-D-arabino-heptulosonate 7-phosphate (DAHP) to dehydroquinate (DHQ). This chain is 3-dehydroquinate synthase, found in Dehalococcoides mccartyi (strain CBDB1).